The chain runs to 258 residues: Tryptophan synthase alpha chain (258 aa).

Residues E44 and D55 each act as proton acceptor in the active site.

Belongs to the TrpA family. Tetramer of two alpha and two beta chains.

The enzyme catalyses (1S,2R)-1-C-(indol-3-yl)glycerol 3-phosphate + L-serine = D-glyceraldehyde 3-phosphate + L-tryptophan + H2O. It participates in amino-acid biosynthesis; L-tryptophan biosynthesis; L-tryptophan from chorismate: step 5/5. Functionally, the alpha subunit is responsible for the aldol cleavage of indoleglycerol phosphate to indole and glyceraldehyde 3-phosphate. The polypeptide is Tryptophan synthase alpha chain (Petrotoga mobilis (strain DSM 10674 / SJ95)).